A 139-amino-acid chain; its full sequence is uncharacterized protein (139 aa).

This sequence to S.typhimurium FliF.

In terms of biological role, may be involved in the assembly, structure, or function of the flagellum. May polymerize to form a filamentous structure that is part of the flagellum. This is an uncharacterized protein from Bacillus subtilis (strain 168).